Consider the following 87-residue polypeptide: Small ribosomal subunit protein bS16 (87 aa).

This sequence belongs to the bacterial ribosomal protein bS16 family.

In Fusobacterium nucleatum subsp. nucleatum (strain ATCC 25586 / DSM 15643 / BCRC 10681 / CIP 101130 / JCM 8532 / KCTC 2640 / LMG 13131 / VPI 4355), this protein is Small ribosomal subunit protein bS16.